The following is a 228-amino-acid chain: MQKLKQQVFEANMDLPRYGLVTFTWGNVSAIDRERGLVVIKPSGIAYESMKAADMVVVDMSGKVVEGEYRPSSDTATHLELYRRYPSLGGIVHTHSTHATAWAQAGLAIPALGTTHADYFFGDIPCTRGLSEEEVQGEYELNTGKVIIETLGNAEPLHTPGIVVYQHGPFAWGKDAHDAVHNAVVMEEVAKMAWIARSINPQLNHIDSYLMNKHFMRKHGPNAYYGQK.

Residues 26 to 27 (GN), 43 to 44 (SG), and 72 to 73 (SS) contribute to the substrate site. Zn(2+) contacts are provided by Asp-74, His-93, and His-95. The active-site Proton donor/acceptor is the Asp-118. His-167 lines the Zn(2+) pocket. The Proton donor/acceptor role is filled by Tyr-225.

It belongs to the aldolase class II family. AraD/FucA subfamily. The cofactor is Zn(2+).

The catalysed reaction is L-ribulose 5-phosphate = D-xylulose 5-phosphate. It functions in the pathway cofactor degradation; L-ascorbate degradation; D-xylulose 5-phosphate from L-ascorbate: step 4/4. Catalyzes the isomerization of L-ribulose 5-phosphate to D-xylulose 5-phosphate. Is involved in the anaerobic L-ascorbate utilization. The polypeptide is L-ribulose-5-phosphate 4-epimerase UlaF (Escherichia coli O7:K1 (strain IAI39 / ExPEC)).